A 105-amino-acid polypeptide reads, in one-letter code: Large ribosomal subunit protein bL21 (105 aa).

The protein belongs to the bacterial ribosomal protein bL21 family. Part of the 50S ribosomal subunit. Contacts protein L20.

Functionally, this protein binds to 23S rRNA in the presence of protein L20. The chain is Large ribosomal subunit protein bL21 from Rhizobium etli (strain ATCC 51251 / DSM 11541 / JCM 21823 / NBRC 15573 / CFN 42).